An 813-amino-acid chain; its full sequence is DNA ligase (813 aa).

NAD(+) is bound by residues 41-45, 90-91, and E127; these read DAEYD and SI. The active-site N6-AMP-lysine intermediate is the K129. 4 residues coordinate NAD(+): R150, E189, K307, and K331. The Zn(2+) site is built by C440, C443, C458, and C464. A BRCT domain is found at 729 to 813; that stretch reads AEEGALSGKT…LLQNPPGDSA (85 aa).

It belongs to the NAD-dependent DNA ligase family. LigA subfamily. Requires Mg(2+) as cofactor. It depends on Mn(2+) as a cofactor.

The enzyme catalyses NAD(+) + (deoxyribonucleotide)n-3'-hydroxyl + 5'-phospho-(deoxyribonucleotide)m = (deoxyribonucleotide)n+m + AMP + beta-nicotinamide D-nucleotide.. DNA ligase that catalyzes the formation of phosphodiester linkages between 5'-phosphoryl and 3'-hydroxyl groups in double-stranded DNA using NAD as a coenzyme and as the energy source for the reaction. It is essential for DNA replication and repair of damaged DNA. This chain is DNA ligase, found in Ralstonia nicotianae (strain ATCC BAA-1114 / GMI1000) (Ralstonia solanacearum).